We begin with the raw amino-acid sequence, 395 residues long: Zinc-regulated GTPase metalloprotein activator 1E (395 aa).

The segment at 1-22 is disordered; it reads MLPAVGSVDEEEDPAEEDCPEL. Positions 8–20 are enriched in acidic residues; sequence VDEEEDPAEEDCP. A psi-PxLVp motif motif is present at residues 17–24; sequence EDCPELVP. 49–56 is a binding site for GTP; it reads GYLGAGKT. Residues cysteine 107, cysteine 109, and cysteine 110 each contribute to the Zn(2+) site. A CXCC motif motif is present at residues 107 to 110; it reads CLCC. Residues 110 to 114 and 203 to 206 contribute to the GTP site; these read CSVKD and NKTD. The CobW C-terminal domain maps to 274-377; the sequence is IVTITFEVPG…ILKQLFIATV (104 aa).

Belongs to the SIMIBI class G3E GTPase family. ZNG1 subfamily.

It is found in the nucleus. It catalyses the reaction GTP + H2O = GDP + phosphate + H(+). In terms of biological role, zinc chaperone that directly transfers zinc cofactor to target metalloproteins, thereby activating them. Catalyzes zinc insertion into the active site of methionine aminopeptidase METAP1, which function to cleave the initiator methionine from polypeptides during or after protein translation. Mechanistically, the N-terminal psi-PxLVp motif binds to the C6H2-type zinc finger of inactive form of METAP1. After formation of the docked complex, zinc is transferred from the CXCC motif in the GTPase domain of ZNG1E to the zinc binding site in the peptidase domain of METAP1 in a process requiring GTP hydrolysis. GTP/GDP exchange is required for release of active METAP1. In Homo sapiens (Human), this protein is Zinc-regulated GTPase metalloprotein activator 1E.